The chain runs to 105 residues: Nucleoid-associated protein RPC_4847 (105 aa).

Belongs to the YbaB/EbfC family. Homodimer.

The protein resides in the cytoplasm. Its subcellular location is the nucleoid. Functionally, binds to DNA and alters its conformation. May be involved in regulation of gene expression, nucleoid organization and DNA protection. The sequence is that of Nucleoid-associated protein RPC_4847 from Rhodopseudomonas palustris (strain BisB18).